Reading from the N-terminus, the 226-residue chain is Transmembrane protein 204 (226 aa).

Residues 1–5 (MTVRK) are Cytoplasmic-facing. The chain crosses the membrane as a helical span at residues 6–26 (VVATAVLVALVSLVLNNAAAF). Residues 27-103 (TPNWVYQTLE…LQFDMMRACN (77 aa)) lie on the Extracellular side of the membrane. A helical membrane pass occupies residues 104-124 (LVATAALAAGQLTFVLGLTGL). Residues 125 to 136 (PLLSPDAQCWEE) lie on the Cytoplasmic side of the membrane. A helical membrane pass occupies residues 137 to 157 (AMAAAFQLASFVLVIGLVTFY). The Extracellular segment spans residues 158–170 (RIGPYTSLSWSCY). The chain crosses the membrane as a helical span at residues 171 to 191 (LNIGACLLATLAAAMLIWNVL). Over 192 to 226 (HRREDCTAPRVIVISRSLTARFRRGLDNDYVESPC) the chain is Cytoplasmic.

It localises to the cell junction. Its subcellular location is the adherens junction. The protein localises to the cell membrane. Functionally, can influence paracellular permeability. Appears to be involved in cell-cell interactions through adherens. This Bos taurus (Bovine) protein is Transmembrane protein 204 (TMEM204).